Consider the following 447-residue polypeptide: tRNA threonylcarbamoyladenosine dehydratase 2 (447 aa).

3 helical membrane passes run 9–29 (LITATALFTVAVTTITDYAWT), 86–106 (NQYVVVVGAGGVGSWVVNSLV), and 294–314 (ILPVLGTMPSLFGLTITTWIL).

The protein belongs to the HesA/MoeB/ThiF family.

It is found in the mitochondrion outer membrane. Its function is as follows. Catalyzes the ATP-dependent dehydration of threonylcarbamoyladenosine at position 37 (t(6)A37) to form cyclic t(6)A37 (ct(6)A37) in tRNAs that read codons beginning with adenine. The polypeptide is tRNA threonylcarbamoyladenosine dehydratase 2 (TCD2) (Saccharomyces cerevisiae (strain ATCC 204508 / S288c) (Baker's yeast)).